A 430-amino-acid chain; its full sequence is Histidine--tRNA ligase (430 aa).

The protein belongs to the class-II aminoacyl-tRNA synthetase family. As to quaternary structure, homodimer.

The protein resides in the cytoplasm. It carries out the reaction tRNA(His) + L-histidine + ATP = L-histidyl-tRNA(His) + AMP + diphosphate + H(+). The chain is Histidine--tRNA ligase from Acinetobacter baumannii (strain ATCC 17978 / DSM 105126 / CIP 53.77 / LMG 1025 / NCDC KC755 / 5377).